The chain runs to 179 residues: Large ribosomal subunit protein uL5 (179 aa).

It belongs to the universal ribosomal protein uL5 family. As to quaternary structure, part of the 50S ribosomal subunit; part of the 5S rRNA/L5/L18/L25 subcomplex. Contacts the 5S rRNA and the P site tRNA. Forms a bridge to the 30S subunit in the 70S ribosome.

Its function is as follows. This is one of the proteins that bind and probably mediate the attachment of the 5S RNA into the large ribosomal subunit, where it forms part of the central protuberance. In the 70S ribosome it contacts protein S13 of the 30S subunit (bridge B1b), connecting the 2 subunits; this bridge is implicated in subunit movement. Contacts the P site tRNA; the 5S rRNA and some of its associated proteins might help stabilize positioning of ribosome-bound tRNAs. The sequence is that of Large ribosomal subunit protein uL5 from Clostridium novyi (strain NT).